We begin with the raw amino-acid sequence, 317 residues long: MYKTIDLFSGIGGIRLGFEKYGCTNVFSSEWDKYARQVYEANFGEKPFGDINGIDPSDIPDHDILLAGFPCQPFSIAGKGLGFEDTRGTLFFNIAEILKTKQPKAFLLENVKRLTTHDSGRTFRIVLETLKQLGYTVYFKVLNTLDFGLPQKRERIYIVGFSDNIPFYFPEPINQYRPLGELLENDRDVEPSYFLSDTLKQKRLAALKKAPPTPSIWHENIGGNVSALPYSCALRAGGSYNYLVVNGVRRLTGREMLRLQGFPDDFEINIPYSQVRKVAGNSVSVPVIEATRKICSLLFPARSNKKGNWIYWRQDDA.

The 301-residue stretch at 2-302 folds into the SAM-dependent MTase C5-type domain; it reads YKTIDLFSGI…KICSLLFPAR (301 aa). The active site involves Cys-71.

The protein belongs to the class I-like SAM-binding methyltransferase superfamily. C5-methyltransferase family.

The catalysed reaction is a 2'-deoxycytidine in DNA + S-adenosyl-L-methionine = a 5-methyl-2'-deoxycytidine in DNA + S-adenosyl-L-homocysteine + H(+). Functionally, a methylase, recognizes the double-stranded sequence 5'-RGCGCY-3', methylates C-5 on both strands, and protects the DNA from cleavage by the NgoBI endonuclease. In Neisseria gonorrhoeae, this protein is Type II methyltransferase M.NgoBI (ngoBIM).